Consider the following 163-residue polypeptide: Endoribonuclease YbeY (163 aa).

Zn(2+)-binding residues include histidine 126, histidine 130, and histidine 136.

This sequence belongs to the endoribonuclease YbeY family. Zn(2+) is required as a cofactor.

The protein localises to the cytoplasm. In terms of biological role, single strand-specific metallo-endoribonuclease involved in late-stage 70S ribosome quality control and in maturation of the 3' terminus of the 16S rRNA. In Chelativorans sp. (strain BNC1), this protein is Endoribonuclease YbeY.